The sequence spans 327 residues: Opticin (327 aa).

Positions methionine 1 to threonine 19 are cleaved as a signal peptide. Tyrosine 61 and tyrosine 67 each carry sulfotyrosine. Positions valine 111–lysine 148 constitute an LRRNT domain. LRR repeat units lie at residues threonine 149–glycine 170, lysine 173–leucine 194, alanine 197–isoleucine 218, glutamate 219–alanine 237, lysine 243–proline 263, serine 264–aspartate 285, and tryptophan 295–tyrosine 315. An intrachain disulfide couples cysteine 284 to cysteine 317.

The protein belongs to the small leucine-rich proteoglycan (SLRP) family. SLRP class III subfamily. In terms of assembly, homodimer. In terms of processing, O-glycosylated. Post-translationally, proteolytically cleaved by MMP1, MMP2, MMP3, MMP7, MMP8, MMP9, ADAMTS4, and ADAMTS5. Proteolytically cleaved by MMP13. Sulfated on tyrosine residues. Ocular tissues, cartilage, ligament, skin, muscle and testes.

It localises to the secreted. Its subcellular location is the extracellular space. It is found in the extracellular matrix. Inhibits angiogenesis in the vitreous humor of the eye, and therefore represses neovascularization. Binds collagen fibrils. May be involved in collagen fiber organization via regulation of other members of the small leucine-rich repeat proteoglycan superfamily. This chain is Opticin (OPTC), found in Canis lupus familiaris (Dog).